Consider the following 509-residue polypeptide: Photosystem II CP47 reaction center protein (509 aa).

A run of 6 helical transmembrane segments spans residues Ser-21–Ser-36, Ile-101–Trp-115, Gly-140–Phe-156, Ile-203–Thr-218, Val-237–Val-252, and Val-457–Arg-472.

This sequence belongs to the PsbB/PsbC family. PsbB subfamily. In terms of assembly, PSII is composed of 1 copy each of membrane proteins PsbA, PsbB, PsbC, PsbD, PsbE, PsbF, PsbH, PsbI, PsbJ, PsbK, PsbL, PsbM, PsbT, PsbX, PsbY, PsbZ, Psb30/Ycf12, peripheral proteins PsbO, CyanoQ (PsbQ), PsbU, PsbV and a large number of cofactors. It forms dimeric complexes. Binds multiple chlorophylls. PSII binds additional chlorophylls, carotenoids and specific lipids. serves as cofactor.

The protein localises to the cellular thylakoid membrane. One of the components of the core complex of photosystem II (PSII). It binds chlorophyll and helps catalyze the primary light-induced photochemical processes of PSII. PSII is a light-driven water:plastoquinone oxidoreductase, using light energy to abstract electrons from H(2)O, generating O(2) and a proton gradient subsequently used for ATP formation. The polypeptide is Photosystem II CP47 reaction center protein (Nostoc sp. (strain PCC 7120 / SAG 25.82 / UTEX 2576)).